Reading from the N-terminus, the 92-residue chain is Small ribosomal subunit protein uS19 (92 aa).

Belongs to the universal ribosomal protein uS19 family.

Its function is as follows. Protein S19 forms a complex with S13 that binds strongly to the 16S ribosomal RNA. This chain is Small ribosomal subunit protein uS19, found in Shewanella amazonensis (strain ATCC BAA-1098 / SB2B).